The sequence spans 275 residues: Elongation factor Ts (275 aa).

An Isoglutamyl lysine isopeptide (Lys-Gln) (interchain with Q-Cter in protein Pup) cross-link involves residue Lys-36. The interval 76–79 (TDFV) is involved in Mg(2+) ion dislocation from EF-Tu.

It belongs to the EF-Ts family.

It localises to the cytoplasm. Functionally, associates with the EF-Tu.GDP complex and induces the exchange of GDP to GTP. It remains bound to the aminoacyl-tRNA.EF-Tu.GTP complex up to the GTP hydrolysis stage on the ribosome. The chain is Elongation factor Ts from Mycolicibacterium smegmatis (strain ATCC 700084 / mc(2)155) (Mycobacterium smegmatis).